The sequence spans 332 residues: UPF0158 protein TC_0713 (332 aa).

2 disordered regions span residues 196–215 and 291–332; these read ALNP…KVEA and LGYD…KARS. The segment covering 295 to 316 has biased composition (acidic residues); that stretch reads GDGDASDFFGEEYDDDDDDDDD. Positions 320–332 are enriched in basic residues; that stretch reads KKAAKRGRKKARS.

Belongs to the UPF0158 family.

The chain is UPF0158 protein TC_0713 from Chlamydia muridarum (strain MoPn / Nigg).